A 2439-amino-acid polypeptide reads, in one-letter code: Protein roller-3 (2439 aa).

A signal peptide spans 1–26 (MLDFPRFSLFLFLLFSSFLFSSFVHA). The Extracellular portion of the chain corresponds to 27–1851 (ATVFSSSLKT…EEEKGGILPY (1825 aa)). Residues Asn64, Asn182, Asn334, Asn394, Asn496, Asn533, Asn657, Asn766, Asn868, Asn1003, Asn1036, Asn1090, and Asn1261 are each glycosylated (N-linked (GlcNAc...) asparagine). In terms of domain architecture, Fibronectin type-III 1 spans 618–720 (KPRIVAVSSI…STSNTALPDL (103 aa)). 4 Fibronectin type-III domains span residues 1403–1503 (SKGI…TGFG), 1507–1628 (APRD…TLDV), 1629–1732 (PGTL…IQQA), and 1738–1843 (VPTA…EKEE). N-linked (GlcNAc...) asparagine glycosylation is found at Asn1567, Asn1636, Asn1677, and Asn1779. The helical transmembrane segment at 1852-1872 (FLGISIILLLAAMILVGCFWL) threads the bilayer. Over 1873–2439 (KSRRRQQMKK…GGTCRSVSQV (567 aa)) the chain is Cytoplasmic. Residues 1928–2199 (VEIVRHISDC…ATILKIFETC (272 aa)) form the Protein kinase domain. ATP-binding positions include 1934–1942 (ISDCSYGSV) and Lys1963. Disordered stretches follow at residues 2214-2277 (NEGS…RPAT), 2315-2348 (SQRP…NRTN), and 2412-2439 (HLRA…VSQV). Polar residues-rich tracts occupy residues 2216-2233 (GSDN…SSRE), 2334-2347 (ATSS…SNRT), and 2420-2439 (PPTR…VSQV).

Its subcellular location is the membrane. Its function is as follows. Involved in larval development and locomotion. The polypeptide is Protein roller-3 (Caenorhabditis briggsae).